A 207-amino-acid polypeptide reads, in one-letter code: 23 kDa calcium-binding protein (207 aa).

Blocked amino end (Met) is present on M1. EF-hand domains lie at 17 to 52 (AKLD…TFEN), 60 to 95 (VTAD…CLKK), 119 to 154 (MKLD…TYKQ), and 161 to 196 (PTEA…GLKK). Ca(2+) contacts are provided by D30, N32, N34, T36, E41, D73, D75, N77, E84, D132, D134, S136, Q138, E143, D174, D176, N178, T180, and E185.

In terms of biological role, expected to play a crucial role in calcium-dependent regulation of ciliary movement. The protein is 23 kDa calcium-binding protein of Tetrahymena thermophila.